A 510-amino-acid polypeptide reads, in one-letter code: NAD(P)H-quinone oxidoreductase subunit 2 A, chloroplastic (510 aa).

Helical transmembrane passes span 24-44 (LLLF…GLIL), 59-79 (WFYF…LFRW), 99-119 (IFQF…VEYI), 124-144 (MAIT…MFLC), 149-169 (LITI…LSGY), 183-203 (YLLM…WLYG), 229-249 (ISLA…PAPF), 295-315 (WHLL…LLAI), 323-343 (MLAY…IVGD), 354-374 (YMLF…LFGL), 395-415 (ALSL…AGFF), and 418-438 (LYLF…IGLL).

This sequence belongs to the complex I subunit 2 family. NDH is composed of at least 16 different subunits, 5 of which are encoded in the nucleus.

Its subcellular location is the plastid. The protein localises to the chloroplast thylakoid membrane. It catalyses the reaction a plastoquinone + NADH + (n+1) H(+)(in) = a plastoquinol + NAD(+) + n H(+)(out). The enzyme catalyses a plastoquinone + NADPH + (n+1) H(+)(in) = a plastoquinol + NADP(+) + n H(+)(out). Its function is as follows. NDH shuttles electrons from NAD(P)H:plastoquinone, via FMN and iron-sulfur (Fe-S) centers, to quinones in the photosynthetic chain and possibly in a chloroplast respiratory chain. The immediate electron acceptor for the enzyme in this species is believed to be plastoquinone. Couples the redox reaction to proton translocation, and thus conserves the redox energy in a proton gradient. This chain is NAD(P)H-quinone oxidoreductase subunit 2 A, chloroplastic, found in Triticum aestivum (Wheat).